The chain runs to 348 residues: Zinc finger and SCAN domain-containing protein 16 (348 aa).

The region spanning 41 to 123 (RQHFRKLCYQ…TVLEDLEREL (83 aa)) is the SCAN box domain. Disordered stretches follow at residues 160-184 (PKKTQLEQEAGKPQRNGDKTRTKNE) and 205-226 (RLNKDTPQHPKSKDIIENEGRS). A compositionally biased stretch (basic and acidic residues) spans 163 to 184 (TQLEQEAGKPQRNGDKTRTKNE). 4 C2H2-type zinc fingers span residues 236–258 (YKCDECGKSFSHSSDLSKHRRTH), 264–286 (YKCDECGKAFIQRSHLIGHHRVH), 292–314 (YKCKECGKDFSGRTGLIQHQRIH), and 320–342 (YECDECGRPFRVSSALIRHQRIH).

This sequence belongs to the krueppel C2H2-type zinc-finger protein family.

The protein resides in the nucleus. In terms of biological role, may be involved in transcriptional regulation. The polypeptide is Zinc finger and SCAN domain-containing protein 16 (ZSCAN16) (Homo sapiens (Human)).